The following is a 666-amino-acid chain: Long chain acyl-CoA synthetase 5 (666 aa).

228 to 239 (IMYTSGTTGDPK) contacts ATP. The tract at residues 495–519 (DGWLHTGDVGEWQPNGSMKIIDRKK) is fatty acid-binding.

Belongs to the ATP-dependent AMP-binding enzyme family. Mg(2+) serves as cofactor.

The catalysed reaction is a long-chain fatty acid + ATP + CoA = a long-chain fatty acyl-CoA + AMP + diphosphate. It participates in lipid metabolism; fatty acid metabolism. Its function is as follows. Activation of long-chain fatty acids for both synthesis of cellular lipids, and degradation via beta-oxidation. Preferentially uses palmitate, palmitoleate, oleate and linoleate. This chain is Long chain acyl-CoA synthetase 5 (LACS5), found in Arabidopsis thaliana (Mouse-ear cress).